The primary structure comprises 637 residues: Sphingomyelin phosphodiesterase B (637 aa).

The first 20 residues, 1 to 20, serve as a signal peptide directing secretion; it reads MKVKAPILLLFVFLINFCFS. A glycan (N-linked (GlcNAc...) asparagine) is linked at Asn-73. The 83-residue stretch at 73–155 folds into the Saposin B-type domain; the sequence is NGTKCDICKF…GFVGFCPYVP (83 aa). 3 disulfides stabilise this stretch: Cys-77-Cys-151, Cys-80-Cys-145, and Cys-108-Cys-119. N-linked (GlcNAc...) asparagine glycosylation is found at Asn-128 and Asn-157. Positions 191 and 193 each coordinate Zn(2+). The cysteines at positions 212 and 233 are disulfide-linked. Asp-263 contributes to the Zn(2+) binding site. Residue Asn-279 is glycosylated (N-linked (GlcNAc...) asparagine). Asn-304 lines the Zn(2+) pocket. Asn-377 carries an N-linked (GlcNAc...) asparagine glycan. His-407, His-441, and His-443 together coordinate Zn(2+). N-linked (GlcNAc...) asparagine glycosylation is found at Asn-523 and Asn-546. Residues Cys-582 and Cys-595 are joined by a disulfide bond. Asn-606 carries an N-linked (GlcNAc...) asparagine glycan.

It belongs to the acid sphingomyelinase family. It depends on Zn(2+) as a cofactor.

It is found in the secreted. Its function is as follows. Converts sphingomyelin to ceramide. In Dictyostelium discoideum (Social amoeba), this protein is Sphingomyelin phosphodiesterase B (sgmB).